The following is a 475-amino-acid chain: MNAATKLPGELGPIHFVGIGGIGMSGIAEVLMTLGYQVQGSDAKRSKITDRLQTLGATIFEGQRAENIGEAGVVVISTAIKKGNPELEEARRRGLPVVRRAEMLAELMRLKSNVAIAGTHGKTTTTTMVATLLDAGGFDPTVINGGVIHAYGSNARAGAGEWMVVEADESDGSFNRLPATIAIVTNIDPEHMEHWGSFDALRKGFQDFVSNIPFYGLAVCCTDHPEVQSLVGRLTDRRVATFGFNAQADVRAINLRYENGVAHFDIALQGEAELNEGEVPVIEGCTLPMPGDHNVSNALAAVAVARHLGMKRAQIREALARFGGVSRRFTRVGEVDGVTIIDDYGHHPVEIAAVLKAARQATKGRVIAVHQPHRYSRLSSLFDDFCTCFNEADVVAIAEVYSAGEEPIPGASRDDLVAGLIAHGHRHARAVMDEGDLERLVREQARPGDMVVCLGAGTISAWANNLPERLTEKAA.

Position 118 to 124 (118 to 124 (GTHGKTT)) interacts with ATP.

This sequence belongs to the MurCDEF family.

The protein resides in the cytoplasm. The enzyme catalyses UDP-N-acetyl-alpha-D-muramate + L-alanine + ATP = UDP-N-acetyl-alpha-D-muramoyl-L-alanine + ADP + phosphate + H(+). The protein operates within cell wall biogenesis; peptidoglycan biosynthesis. Its function is as follows. Cell wall formation. The protein is UDP-N-acetylmuramate--L-alanine ligase of Paracoccus denitrificans (strain Pd 1222).